The sequence spans 127 residues: Large ribosomal subunit protein eL32 (127 aa).

A compositionally biased stretch (basic and acidic residues) spans 37–48 (KWRKPKGTDSKM). Positions 37–65 (KWRKPKGTDSKMRVKLKGKARSPSIGWSS) are disordered.

Belongs to the eukaryotic ribosomal protein eL32 family.

This chain is Large ribosomal subunit protein eL32, found in Thermococcus sibiricus (strain DSM 12597 / MM 739).